Consider the following 346-residue polypeptide: D-fructose 1,6-bisphosphatase class 2/sedoheptulose 1,7-bisphosphatase (346 aa).

The Mn(2+) site is built by Asp33, Glu57, Asp97, and Glu100. Substrate contacts are provided by residues 100–102 (EGT), Tyr131, 176–178 (RDR), and 198–200 (DGD). Position 225 (Glu225) interacts with Mn(2+).

It belongs to the FBPase class 2 family. As to quaternary structure, homotetramer. Mn(2+) is required as a cofactor.

It carries out the reaction beta-D-fructose 1,6-bisphosphate + H2O = beta-D-fructose 6-phosphate + phosphate. It catalyses the reaction D-sedoheptulose 1,7-bisphosphate + H2O = D-sedoheptulose 7-phosphate + phosphate. The protein operates within carbohydrate biosynthesis; Calvin cycle. Catalyzes the hydrolysis of fructose 1,6-bisphosphate (Fru 1,6-P2) and sedoheptulose 1,7-bisphosphate (Sed 1,7-P2) to fructose 6-phosphate and sedoheptulose 7-phosphate, respectively. The protein is D-fructose 1,6-bisphosphatase class 2/sedoheptulose 1,7-bisphosphatase of Gloeobacter violaceus (strain ATCC 29082 / PCC 7421).